A 366-amino-acid polypeptide reads, in one-letter code: Flagellar P-ring protein (366 aa).

Residues 1–20 (MVIKFLSALILLLVTTAAQA) form the signal peptide.

It belongs to the FlgI family. As to quaternary structure, the basal body constitutes a major portion of the flagellar organelle and consists of four rings (L,P,S, and M) mounted on a central rod.

Its subcellular location is the periplasm. It is found in the bacterial flagellum basal body. In terms of biological role, assembles around the rod to form the L-ring and probably protects the motor/basal body from shearing forces during rotation. In Escherichia coli O1:K1 / APEC, this protein is Flagellar P-ring protein.